We begin with the raw amino-acid sequence, 510 residues long: Protein fork head (510 aa).

2 disordered regions span residues 1–62 (MQKL…SPLA) and 175–205 (AMPP…YRRS). Over residues 20–39 (SGGGGPPSGGGGGGGGGGGG) the composition is skewed to gly residues. The span at 47–60 (NNPNPTSNGGSMSP) shows a compositional bias: low complexity. Serine 187 and serine 190 each carry phosphoserine. Residues 209 to 300 (AKPPYSYISL…GNMFENGCYL (92 aa)) constitute a DNA-binding region (fork-head). The disordered stretch occupies residues 309–359 (EKKEAIRQLHKSPSHSSLEATSPGKKDHEDSHHMHHHHHSRLDHHQHHKEA). Residues serine 320, serine 322, and serine 330 each carry the phosphoserine modification. The segment covering 341–356 (HMHHHHHSRLDHHQHH) has biased composition (basic residues).

It is found in the nucleus. Functionally, fkh promotes terminal as opposed to segmental development. In the absence of fkh, this developmental switch does not occur. The nuclear localization of the fkh protein suggest that fkh regulates the transcription of other, subordinate, genes. In Drosophila melanogaster (Fruit fly), this protein is Protein fork head (fkh).